Reading from the N-terminus, the 164-residue chain is MTVEIANESGVDVDELRLLDLARYVLDRMRIHPLAELSILLVDEGEMAVLHERWMDEPGPTDVLSFPMDELRPGRLDVEIDPDAEPAVLGDVVLCPAVAKQQARHAGHSTQDELELLTVHGILHLLGYDHAEEDAEREMFALQSELLTAWRADRRIAGRPGRKR.

Zn(2+) is bound by residues His-120, His-124, and His-130.

It belongs to the endoribonuclease YbeY family. Zn(2+) is required as a cofactor.

The protein localises to the cytoplasm. Its function is as follows. Single strand-specific metallo-endoribonuclease involved in late-stage 70S ribosome quality control and in maturation of the 3' terminus of the 16S rRNA. This Acidothermus cellulolyticus (strain ATCC 43068 / DSM 8971 / 11B) protein is Endoribonuclease YbeY.